The following is a 381-amino-acid chain: Arf-GAP with dual PH domain-containing protein 2 (381 aa).

Residues 9-131 (KRLLELLRAP…FMADGETISL (123 aa)) form the Arf-GAP domain. Residues 25–48 (CADCGAADPDWASYKLGIFICLNC) form a C4-type zinc finger. PH domains are found at residues 132 to 233 (PGNR…AARL) and 255 to 361 (NYLK…GVLS).

Highly expressed in placenta, spleen, kidney, skeletal muscle and adrenal gland. Weakly expressed in thyroid, liver, heart, lung, small intestine, peripheral blood leukocytes. Not detected in spinal cord, brain, stomach, trachea, colon, lymph node and bone marrow.

The protein resides in the cytoplasm. The protein localises to the cell membrane. In terms of biological role, GTPase-activating protein for the ADP ribosylation factor family (Potential). Binds phosphatidylinositol 3,4,5-trisphosphate (PtdInsP3) and inositol 1,3,4,5-tetrakisphosphate (InsP4). Possesses a stoichiometry of two binding sites for InsP4 with identical affinity. The sequence is that of Arf-GAP with dual PH domain-containing protein 2 (ADAP2) from Homo sapiens (Human).